Here is a 118-residue protein sequence, read N- to C-terminus: DNA-binding protein MmarC6_0793 (118 aa).

Positions 1–12 (MNPEEIRQRRLQ) are enriched in basic and acidic residues. Residues 1 to 33 (MNPEEIRQRRLQEMQAKAQEQGAQDPEAQRQMQ) form a disordered region. The segment covering 24 to 33 (QDPEAQRQMQ) has biased composition (low complexity).

This sequence belongs to the PDCD5 family.

This is DNA-binding protein MmarC6_0793 from Methanococcus maripaludis (strain C6 / ATCC BAA-1332).